The primary structure comprises 118 residues: NADH-quinone oxidoreductase subunit A (118 aa).

Helical transmembrane passes span 8-28 (IGIF…LAFF), 64-84 (ALAF…AVAF), and 87-107 (VGLY…AGLL).

Belongs to the complex I subunit 3 family. As to quaternary structure, NDH-1 is composed of 14 different subunits. Subunits NuoA, H, J, K, L, M, N constitute the membrane sector of the complex.

The protein localises to the cell membrane. It catalyses the reaction a quinone + NADH + 5 H(+)(in) = a quinol + NAD(+) + 4 H(+)(out). NDH-1 shuttles electrons from NADH, via FMN and iron-sulfur (Fe-S) centers, to quinones in the respiratory chain. The immediate electron acceptor for the enzyme in this species is believed to be ubiquinone. Couples the redox reaction to proton translocation (for every two electrons transferred, four hydrogen ions are translocated across the cytoplasmic membrane), and thus conserves the redox energy in a proton gradient. This is NADH-quinone oxidoreductase subunit A from Chloroflexus aurantiacus (strain ATCC 29366 / DSM 635 / J-10-fl).